Here is a 167-residue protein sequence, read N- to C-terminus: Protein-export protein SecB (167 aa).

It belongs to the SecB family. In terms of assembly, homotetramer, a dimer of dimers. One homotetramer interacts with 1 SecA dimer.

Its subcellular location is the cytoplasm. Its function is as follows. One of the proteins required for the normal export of preproteins out of the cell cytoplasm. It is a molecular chaperone that binds to a subset of precursor proteins, maintaining them in a translocation-competent state. It also specifically binds to its receptor SecA. The polypeptide is Protein-export protein SecB (Wolbachia pipientis wMel).